A 495-amino-acid polypeptide reads, in one-letter code: Leucine aminopeptidase 2 (495 aa).

Positions 1–21 (MKSQLLSLAVAVTTISQGVVG) are cleaved as a signal peptide. Positions 124–218 (PPASKIMAEL…EDGKNLATLV (95 aa)) constitute a PA domain. Residues N142 and N235 are each glycosylated (N-linked (GlcNAc...) asparagine). Residues H259 and D271 each coordinate Zn(2+). N272 carries N-linked (GlcNAc...) asparagine glycosylation. Residue E303 is the Proton acceptor of the active site. Positions 304 and 332 each coordinate Zn(2+). N-linked (GlcNAc...) asparagine glycosylation occurs at N352. H430 lines the Zn(2+) pocket.

Belongs to the peptidase M28 family. M28A subfamily. In terms of assembly, monomer. Zn(2+) is required as a cofactor.

The protein resides in the secreted. With respect to regulation, activity is inhibited by EDTA, o-phenanthroline, bestatin and amastatin. Extracellular aminopeptidase that releases a wide variety of amino acids from natural peptides and contributes to pathogenicity. This Trichophyton rubrum (Athlete's foot fungus) protein is Leucine aminopeptidase 2 (LAP2).